The following is a 218-amino-acid chain: Small ribosomal subunit protein uS3 (218 aa).

A KH type-2 domain is found at isoleucine 38–lysine 106.

This sequence belongs to the universal ribosomal protein uS3 family. As to quaternary structure, part of the 30S ribosomal subunit. Forms a tight complex with proteins S10 and S14.

Binds the lower part of the 30S subunit head. Binds mRNA in the 70S ribosome, positioning it for translation. The protein is Small ribosomal subunit protein uS3 of Anoxybacillus flavithermus (strain DSM 21510 / WK1).